A 198-amino-acid chain; its full sequence is Glycerol-3-phosphate acyltransferase (198 aa).

Transmembrane regions (helical) follow at residues 5 to 25 (LILLSLLAYVIGSIPSGLWIG), 56 to 76 (SIVTVMDILKGTVATLLPFFF), 84 to 104 (FWLLTGAFAIIGHSFPLFAGF), 114 to 134 (AGVILAYAPLLFVAALVVFLV), and 158 to 178 (LFMGDWILIILVACIALFVIW).

It belongs to the PlsY family. In terms of assembly, probably interacts with PlsX.

The protein localises to the cell membrane. It catalyses the reaction an acyl phosphate + sn-glycerol 3-phosphate = a 1-acyl-sn-glycero-3-phosphate + phosphate. It functions in the pathway lipid metabolism; phospholipid metabolism. In terms of biological role, catalyzes the transfer of an acyl group from acyl-phosphate (acyl-PO(4)) to glycerol-3-phosphate (G3P) to form lysophosphatidic acid (LPA). This enzyme utilizes acyl-phosphate as fatty acyl donor, but not acyl-CoA or acyl-ACP. The chain is Glycerol-3-phosphate acyltransferase from Listeria monocytogenes serotype 4b (strain CLIP80459).